The following is a 414-amino-acid chain: Multifunctional CCA protein (414 aa).

Positions 8 and 11 each coordinate ATP. Residues glycine 8 and arginine 11 each contribute to the CTP site. Residues aspartate 21 and aspartate 23 each coordinate Mg(2+). 3 residues coordinate ATP: arginine 91, arginine 137, and arginine 140. CTP-binding residues include arginine 91, arginine 137, and arginine 140. The HD domain maps to threonine 228–tryptophan 329.

Belongs to the tRNA nucleotidyltransferase/poly(A) polymerase family. Bacterial CCA-adding enzyme type 1 subfamily. As to quaternary structure, monomer. Can also form homodimers and oligomers. Requires Mg(2+) as cofactor. Ni(2+) serves as cofactor.

It catalyses the reaction a tRNA precursor + 2 CTP + ATP = a tRNA with a 3' CCA end + 3 diphosphate. The enzyme catalyses a tRNA with a 3' CCA end + 2 CTP + ATP = a tRNA with a 3' CCACCA end + 3 diphosphate. Catalyzes the addition and repair of the essential 3'-terminal CCA sequence in tRNAs without using a nucleic acid template. Adds these three nucleotides in the order of C, C, and A to the tRNA nucleotide-73, using CTP and ATP as substrates and producing inorganic pyrophosphate. tRNA 3'-terminal CCA addition is required both for tRNA processing and repair. Also involved in tRNA surveillance by mediating tandem CCA addition to generate a CCACCA at the 3' terminus of unstable tRNAs. While stable tRNAs receive only 3'-terminal CCA, unstable tRNAs are marked with CCACCA and rapidly degraded. This is Multifunctional CCA protein from Serratia proteamaculans (strain 568).